Reading from the N-terminus, the 284-residue chain is 4-diphosphocytidyl-2-C-methyl-D-erythritol kinase (284 aa).

Lysine 17 is an active-site residue. An ATP-binding site is contributed by 100-110; it reads PMGGGLGGGSS. Aspartate 142 is an active-site residue.

The protein belongs to the GHMP kinase family. IspE subfamily.

The catalysed reaction is 4-CDP-2-C-methyl-D-erythritol + ATP = 4-CDP-2-C-methyl-D-erythritol 2-phosphate + ADP + H(+). Its pathway is isoprenoid biosynthesis; isopentenyl diphosphate biosynthesis via DXP pathway; isopentenyl diphosphate from 1-deoxy-D-xylulose 5-phosphate: step 3/6. In terms of biological role, catalyzes the phosphorylation of the position 2 hydroxy group of 4-diphosphocytidyl-2C-methyl-D-erythritol. The polypeptide is 4-diphosphocytidyl-2-C-methyl-D-erythritol kinase (Aromatoleum aromaticum (strain DSM 19018 / LMG 30748 / EbN1) (Azoarcus sp. (strain EbN1))).